Reading from the N-terminus, the 401-residue chain is Cysteine desulfurase CsdA (401 aa).

Position 222 is an N6-(pyridoxal phosphate)lysine (lysine 222). Cysteine 358 (cysteine persulfide intermediate) is an active-site residue.

Belongs to the class-V pyridoxal-phosphate-dependent aminotransferase family. Csd subfamily. In terms of assembly, homodimer. Forms a heterodimer with CsdE. Pyridoxal 5'-phosphate serves as cofactor.

It carries out the reaction (sulfur carrier)-H + L-cysteine = (sulfur carrier)-SH + L-alanine. The catalysed reaction is L-selenocysteine + AH2 = hydrogenselenide + L-alanine + A + H(+). The enzyme catalyses 3-sulfino-L-alanine + H2O = sulfite + L-alanine + H(+). Its activity is regulated as follows. Cysteine desulfurase activity is increased 2-fold in the presence of CsdE. In terms of biological role, catalyzes the removal of elemental sulfur and selenium atoms from L-cysteine, L-cystine, L-selenocysteine, and L-selenocystine to produce L-alanine, and transiently retains the released sulfur atom on a cysteine residue, in the form of a persulfide. Can also desulfinate L-cysteine sulfinate (3-sulfino-L-alanine), which is the best substrate of the enzyme. Functions as a selenium delivery protein in the pathway for the biosynthesis of selenophosphate. Seems to participate in Fe/S biogenesis by recruiting the SufBCD-SufE proteins. Transfers sulfur to CsdE that increases the cysteine desulfurase activity of CsdA. Can also transfer sulfur directly to TcdA/CsdL in vitro. Appears to support the function of TcdA in the generation of cyclic threonylcarbamoyladenosine at position 37 (ct(6)A37) in tRNAs that read codons beginning with adenine. The polypeptide is Cysteine desulfurase CsdA (csdA) (Escherichia coli (strain K12)).